The chain runs to 917 residues: Gamma-tubulin complex component 3 (917 aa).

Belongs to the TUBGCP family. In terms of assembly, gamma-tubulin small complex (Gamma TuSC) is a heterotetrameric complex which contains two molecules of gamma-tubulin, and one molecule each of Dgrip84 and Dgrip91. The gamma-tubulin in this complex binds preferentially to GDP over GTP.

It is found in the cytoplasm. Its subcellular location is the cytoskeleton. It localises to the microtubule organizing center. The protein resides in the centrosome. The protein localises to the perinuclear region. In Drosophila melanogaster (Fruit fly), this protein is Gamma-tubulin complex component 3.